The primary structure comprises 326 residues: Beta-ketoacyl-[acyl-carrier-protein] synthase III (326 aa).

Active-site residues include Cys120 and His253. The segment at 254–258 (QANIR) is ACP-binding. Asn283 is a catalytic residue.

Belongs to the thiolase-like superfamily. FabH family. Homodimer.

It localises to the cytoplasm. The enzyme catalyses malonyl-[ACP] + acetyl-CoA + H(+) = 3-oxobutanoyl-[ACP] + CO2 + CoA. The protein operates within lipid metabolism; fatty acid biosynthesis. Functionally, catalyzes the condensation reaction of fatty acid synthesis by the addition to an acyl acceptor of two carbons from malonyl-ACP. Catalyzes the first condensation reaction which initiates fatty acid synthesis and may therefore play a role in governing the total rate of fatty acid production. Possesses both acetoacetyl-ACP synthase and acetyl transacylase activities. Its substrate specificity determines the biosynthesis of branched-chain and/or straight-chain of fatty acids. This chain is Beta-ketoacyl-[acyl-carrier-protein] synthase III, found in Cupriavidus pinatubonensis (strain JMP 134 / LMG 1197) (Cupriavidus necator (strain JMP 134)).